A 277-amino-acid chain; its full sequence is MAEVLEFRVPAGSAQTLLVWGLEPTVGLEHSLFSVFSKFGLLYSVRVHSNAAVAGPGCYAIIKFYSAADASRAQHACNGQRLFQNSPLKVCVCTKQKGFQQQVLALNSNKCQELANHYLGFNGWSSRIITLQNVSGFDDENEEVGKKRSVRYLCAVEVTLPNHGVRTRGVGLGEADVESGEDPLEFGTATRRVQKLAVGKALSSAFQKILLVVLESGKVAVEYNHAAEEPTDSLTEEELEGLVQVSELPLEPFDLEEEVLSDLTLDDELPVWEVPSN.

One can recognise an RRM domain in the interval glutamine 15–lysine 95.

In terms of assembly, homodimer.

It is found in the nucleus. The protein resides in the cytoplasm. It localises to the nucleolus. Its function is as follows. Confers resistance to the antitumor agent cisplatin. Binds preferentially to sites of DNA modified by cisplatin in vitro. Binds to double-stranded DNA in a cooperative manner resulting in the formation of filament-like structures. Binds to single-stranded DNA with no cooperativity. Binds to RNA. In Gallus gallus (Chicken), this protein is RAD52 motif-containing protein 1 (RDM1).